Here is a 120-residue protein sequence, read N- to C-terminus: ATP-dependent Clp protease adapter protein ClpS (120 aa).

A disordered region spans residues 1–27 (MHAPSEIRLTFNQDRPQSNEDDGSGLA).

Belongs to the ClpS family. As to quaternary structure, binds to the N-terminal domain of the chaperone ClpA.

Functionally, involved in the modulation of the specificity of the ClpAP-mediated ATP-dependent protein degradation. The polypeptide is ATP-dependent Clp protease adapter protein ClpS (Pseudomonas putida (strain GB-1)).